A 317-amino-acid chain; its full sequence is MKKTANKVVLIGAGAVGTSFLYAAINQGIAEHYVLIDAFPQPAEGNALDLSDTLAVIPHSFTSIKAGSYEDCKDADVVVITAGRPQKPGETRLEMVAGNAEIMKNIATEVKKSGFDGITVIASNPVDVITHVYQKVTGFDPHKVIGSGTTLDSARLRRLVGQKLNVKPESVQAYVAGEHGDSSVAIWSQANIMGRPILDYVKCGCLTLEDLDQIQKDTVDMAYKIINLKRATFYGIGACLTKIVNAVLRDEKATLMVGAQLNGEYKNKDLYTGVPAIIGSNGWEKIIEWDLTKEEQEKFDKSCETLHKTIDSVKHLF.

Residues Val16, Asp37, and Tyr69 each coordinate NAD(+). Substrate-binding positions include Gln86, Arg92, and 124–127 (NPVD). Residues 122 to 124 (ASN) and Ser147 contribute to the NAD(+) site. 152–155 (DSAR) provides a ligand contact to substrate. The Proton acceptor role is filled by His179. The residue at position 223 (Tyr223) is a Phosphotyrosine. Position 232 (Thr232) interacts with substrate.

This sequence belongs to the LDH/MDH superfamily. LDH family. Homotetramer.

Its subcellular location is the cytoplasm. It carries out the reaction (S)-lactate + NAD(+) = pyruvate + NADH + H(+). It participates in fermentation; pyruvate fermentation to lactate; (S)-lactate from pyruvate: step 1/1. Functionally, catalyzes the conversion of lactate to pyruvate. This Mycoplasma capricolum subsp. capricolum (strain California kid / ATCC 27343 / NCTC 10154) protein is L-lactate dehydrogenase.